Here is a 302-residue protein sequence, read N- to C-terminus: Zinc transporter ZIP1 (302 aa).

The Extracellular segment spans residues Met-1 to Gln-6. The helical transmembrane segment at Val-7–Ala-27 threads the bilayer. The Cytoplasmic segment spans residues Arg-28–Val-44. Residues Leu-45–Ile-65 form a helical membrane-spanning segment. Over Pro-66–Pro-86 the chain is Extracellular. The helical transmembrane segment at Leu-87–Leu-107 threads the bilayer. Residues Ser-108–Arg-158 lie on the Cytoplasmic side of the membrane. The helical transmembrane segment at Ser-159 to Leu-179 threads the bilayer. At Gln-180–Lys-185 the chain is on the extracellular side. The helical transmembrane segment at Val-186 to Val-206 threads the bilayer. Residues Lys-207–Val-219 are Cytoplasmic-facing. Residues Leu-220–Ile-240 traverse the membrane as a helical segment. The Extracellular portion of the chain corresponds to Glu-241–Gly-247. A helical transmembrane segment spans residues Gly-248–Leu-268. Residues Glu-269 to Pro-281 lie on the Cytoplasmic side of the membrane. Residues Leu-282 to Gly-302 form a helical membrane-spanning segment.

Belongs to the ZIP transporter (TC 2.A.5) family. In terms of tissue distribution, ubiquitous. Highest levels in ovary, high levels in heart, eye, kidney and brain, moderate levels in intestine and low levels in gill and skin.

The protein localises to the cell membrane. It localises to the endoplasmic reticulum membrane. It catalyses the reaction Zn(2+)(in) = Zn(2+)(out). Transporter for the divalent cation Zn(2+). Mediates the influx of Zn(2+) into cells from extracellular space. This chain is Zinc transporter ZIP1 (slc39a1), found in Danio rerio (Zebrafish).